A 238-amino-acid polypeptide reads, in one-letter code: MRPNNRENNQPRQIKITRNYTKHAEGSVLVEFGDTKVLCTATVEDAVPRFLKGQGQGWVTAEYGMLPRSTHSRMQREAAKGKQGGRTMEIQRLIARSLRAMVDLKALGERAITLDCDVIQADGGTRTASITGAAVALCDAINSLIENGTLKTNPIKGLVSAISVGIVDGQAVCDLEYVEDSAAETDMNVVMMEDGRMIEVQGTAEGEPFSHEELLTLLDLAKQGCNQIFIAQREALGL.

Phosphate-binding positions include arginine 86 and 124-126; that span reads GTR.

The protein belongs to the RNase PH family. Homohexameric ring arranged as a trimer of dimers.

It catalyses the reaction tRNA(n+1) + phosphate = tRNA(n) + a ribonucleoside 5'-diphosphate. In terms of biological role, phosphorolytic 3'-5' exoribonuclease that plays an important role in tRNA 3'-end maturation. Removes nucleotide residues following the 3'-CCA terminus of tRNAs; can also add nucleotides to the ends of RNA molecules by using nucleoside diphosphates as substrates, but this may not be physiologically important. Probably plays a role in initiation of 16S rRNA degradation (leading to ribosome degradation) during starvation. This Haemophilus influenzae (strain PittEE) protein is Ribonuclease PH.